Consider the following 233-residue polypeptide: 2,3,4,5-tetrahydropyridine-2,6-dicarboxylate N-acetyltransferase (233 aa).

It belongs to the transferase hexapeptide repeat family. DapH subfamily.

It carries out the reaction (S)-2,3,4,5-tetrahydrodipicolinate + acetyl-CoA + H2O = L-2-acetamido-6-oxoheptanedioate + CoA. It functions in the pathway amino-acid biosynthesis; L-lysine biosynthesis via DAP pathway; LL-2,6-diaminopimelate from (S)-tetrahydrodipicolinate (acetylase route): step 1/3. In terms of biological role, catalyzes the transfer of an acetyl group from acetyl-CoA to tetrahydrodipicolinate. The sequence is that of 2,3,4,5-tetrahydropyridine-2,6-dicarboxylate N-acetyltransferase from Thermotoga petrophila (strain ATCC BAA-488 / DSM 13995 / JCM 10881 / RKU-1).